The following is a 208-amino-acid chain: Large ribosomal subunit protein uL3 (208 aa).

Residues 116-148 (GFQGVIKRHGQSRGPMAHGSRYHRRPGSMGPVA) form a disordered region.

The protein belongs to the universal ribosomal protein uL3 family. Part of the 50S ribosomal subunit. Forms a cluster with proteins L14 and L19.

One of the primary rRNA binding proteins, it binds directly near the 3'-end of the 23S rRNA, where it nucleates assembly of the 50S subunit. This Streptococcus pyogenes serotype M5 (strain Manfredo) protein is Large ribosomal subunit protein uL3.